Here is a 173-residue protein sequence, read N- to C-terminus: Probable chemoreceptor glutamine deamidase CheD (173 aa).

The protein belongs to the CheD family.

The enzyme catalyses L-glutaminyl-[protein] + H2O = L-glutamyl-[protein] + NH4(+). Probably deamidates glutamine residues to glutamate on methyl-accepting chemotaxis receptors (MCPs), playing an important role in chemotaxis. The protein is Probable chemoreceptor glutamine deamidase CheD of Haloarcula marismortui (strain ATCC 43049 / DSM 3752 / JCM 8966 / VKM B-1809) (Halobacterium marismortui).